A 506-amino-acid polypeptide reads, in one-letter code: MDTILALTGITKRFPGVVALRGIDLRVARGEIHALLGENGAGKSTLMKILCGIHPPDEGVIALDGEPRRFANHHDAIAAGVGIVFQEFSLIPELNAVDNLFLGREWRGRLGLRERARMRRAAADIFARLDVAIDLSAPVRELSVAQQQFVEIGKALSLDARLLILDEPTATLTPAEAAHLFGVMRELKRRGVAMIFISHHLDEIFEVCDRITVLRDGQYVGTTEVARTDVGALVEMMVGRRIEQSFPPKPRLARDAAPVLEVDALQVRENGPVNRFALREGEILGFAGLVGSGRTSSALALIGAKPARVRRMRVRGRPVRLADPAAALAAGIGLLPESRKTQGLIPAFSIRHNIAINNLGKHRRLRWFVDAAAETRTTLELMQRLGVKAPTPHTRVDTLSGGNQQKVVIARWLNHHTRILIFDEPTRGIDIGAKAEIYQLMRELSARGYSIVLISSELPEIVGLCDRVAVFRQGRIEAMLEGEAIEPNTVMTYATSDVRGANHEHA.

ABC transporter domains lie at 5 to 241 and 254 to 498; these read LALT…VGRR and RDAA…TSDV. 37–44 contributes to the ATP binding site; sequence GENGAGKS.

It belongs to the ABC transporter superfamily. Ribose importer (TC 3.A.1.2.1) family. The complex is composed of an ATP-binding protein (RbsA), two transmembrane proteins (RbsC) and a solute-binding protein (RbsB).

Its subcellular location is the cell inner membrane. It carries out the reaction D-ribose(out) + ATP + H2O = D-ribose(in) + ADP + phosphate + H(+). Its function is as follows. Part of the ABC transporter complex RbsABC involved in ribose import. Responsible for energy coupling to the transport system. The chain is Ribose import ATP-binding protein RbsA from Burkholderia mallei (strain ATCC 23344).